The chain runs to 280 residues: Putative transcription factor kapC (280 aa).

Residues 1 to 102 (MQPALAPHPS…GKRPLSTSKR (102 aa)) form a disordered region. Residues 39–49 (PQPPAPQPPHM) are compositionally biased toward pro residues. Polar residues predominate over residues 79 to 89 (TQPDVTGQETP). The 64-residue stretch at 96–159 (PLSTSKRAAQ…EYIINLQSRL (64 aa)) folds into the bZIP domain. A basic motif region spans residues 97–120 (LSTSKRAAQNRAAQRAFRQRKEAH). Positions 124 to 155 (LEGKVKAYENMGEAIKALQAENYQLREYIINL) are leucine-zipper. A disordered region spans residues 169–280 (LPGNIDLSQP…EQTHGLPLIS (112 aa)). Over residues 197-211 (APPPTAPQQPQPPHA) the composition is skewed to pro residues.

The protein belongs to the bZIP family.

It localises to the nucleus. Its function is as follows. Putative transcription factor. This chain is Putative transcription factor kapC (kapC), found in Neosartorya fischeri (strain ATCC 1020 / DSM 3700 / CBS 544.65 / FGSC A1164 / JCM 1740 / NRRL 181 / WB 181) (Aspergillus fischerianus).